A 193-amino-acid chain; its full sequence is Bifunctional protein PyrR (193 aa).

Substrate contacts are provided by residues 48 to 49 (TR), R89, R93, 110 to 118 (DDVLFSGRT), R143, and V167. The short motif at 106 to 118 (VVLVDDVLFSGRT) is the PRPP-binding element.

It belongs to the purine/pyrimidine phosphoribosyltransferase family. PyrR subfamily.

The catalysed reaction is UMP + diphosphate = 5-phospho-alpha-D-ribose 1-diphosphate + uracil. Functionally, regulates the transcription of the pyrimidine nucleotide (pyr) operon in response to exogenous pyrimidines. In terms of biological role, also displays a weak uracil phosphoribosyltransferase activity which is not physiologically significant. This chain is Bifunctional protein PyrR, found in Streptomyces coelicolor (strain ATCC BAA-471 / A3(2) / M145).